The following is a 410-amino-acid chain: Lissencephaly-1 homolog (410 aa).

The region spanning 7–39 is the LisH domain; sequence QRDELNRAIADYLRSNGYEEAYSTFKKEAELDN. Positions 32-82 form a coiled coil; sequence KKEAELDNNEELDKKYAGLLEKKWTSVIRLQKKVMELESKLNEAKEEITLG. 7 WD repeats span residues 106–147, 148–189, 190–229, 232–271, 274–333, 336–375, and 378–410; these read GHRS…RTLK, GHTD…RTMH, GHDH…CVKT, GHRE…CKAE, EHEH…CLMT, GHDN…CMKT, and AHEH…WECR.

Belongs to the WD repeat LIS1/nudF family. Can self-associate. Component of the cytosolic PAF-AH (I) heterotetrameric enzyme, which is composed of PAFAH1B1 (beta), PAFAH1B2 (alpha2) and PAFAH1B3 (alpha1) subunits. The catalytic activity of the enzyme resides in the alpha1 (PAFAH1B3) and alpha2 (PAFAH1B2) subunits, whereas the beta subunit (PAFAH1B1) has regulatory activity. Trimer formation is not essential for the catalytic activity. Interacts with dynein, dynactin, nde1 and ndel1.

It is found in the cytoplasm. Its subcellular location is the cytoskeleton. It localises to the microtubule organizing center. The protein resides in the centrosome. Functionally, regulatory subunit (beta subunit) of the cytosolic type I platelet-activating factor (PAF) acetylhydrolase (PAF-AH (I)), an enzyme that catalyzes the hydrolyze of the acetyl group at the sn-2 position of PAF and its analogs and participates in the PAF inactivation. Positively regulates the activity of the minus-end directed microtubule motor protein dynein. May enhance dynein-mediated microtubule sliding by targeting dynein to the microtubule plus end. Required for several dynein- and microtubule-dependent processes such as the maintenance of Golgi integrity, the peripheral transport of microtubule fragments and the coupling of the nucleus and centrosome. May be required for proliferation of neuronal precursors and neuronal migration. In Tetraodon nigroviridis (Spotted green pufferfish), this protein is Lissencephaly-1 homolog (pafah1b1).